Reading from the N-terminus, the 335-residue chain is Ubiquinone biosynthesis protein COQ4, mitochondrial (335 aa).

The transit peptide at 1–10 directs the protein to the mitochondrion; it reads MLRLSLLRST. Residues histidine 210, aspartate 211, histidine 214, and glutamate 226 each coordinate Zn(2+).

The protein belongs to the COQ4 family. Component of a multi-subunit COQ enzyme complex, composed of at least COQ3, COQ4, COQ5, COQ6, COQ7 and COQ9. Interacts with COQ3. Zn(2+) serves as cofactor.

Its subcellular location is the mitochondrion inner membrane. It carries out the reaction 4-hydroxy-3-methoxy-5-(all-trans-hexaprenyl)benzoate + H(+) = 2-methoxy-6-(all-trans-hexaprenyl)phenol + CO2. Its pathway is cofactor biosynthesis; ubiquinone biosynthesis. In terms of biological role, lyase that catalyzes the C1-decarboxylation of 4-hydroxy-3-methoxy-5-(all-trans-hexaprenyl)benzoic acid into 2-methoxy-6-(all-trans-hexaprenyl)phenol during ubiquinone biosynthesis. The protein is Ubiquinone biosynthesis protein COQ4, mitochondrial of Saccharomyces cerevisiae (strain YJM789) (Baker's yeast).